A 652-amino-acid polypeptide reads, in one-letter code: Acetyl-coenzyme A synthetase (652 aa).

CoA-binding positions include 191–194 (RAGR), threonine 311, and asparagine 335. ATP contacts are provided by residues 387–389 (GEP), 411–416 (DTWWQT), aspartate 500, and arginine 515. A CoA-binding site is contributed by serine 523. Residue arginine 526 participates in ATP binding. 3 residues coordinate Mg(2+): valine 537, histidine 539, and isoleucine 542. CoA is bound at residue arginine 584. Position 609 is an N6-acetyllysine; by Pat (lysine 609).

This sequence belongs to the ATP-dependent AMP-binding enzyme family. Monomer. Mg(2+) is required as a cofactor. Post-translationally, acetylated. Deacetylation by the SIR2-homolog deacetylase activates the enzyme.

The catalysed reaction is acetate + ATP + CoA = acetyl-CoA + AMP + diphosphate. Functionally, catalyzes the conversion of acetate into acetyl-CoA (AcCoA), an essential intermediate at the junction of anabolic and catabolic pathways. Acs undergoes a two-step reaction. In the first half reaction, Acs combines acetate with ATP to form acetyl-adenylate (AcAMP) intermediate. In the second half reaction, it can then transfer the acetyl group from AcAMP to the sulfhydryl group of CoA, forming the product AcCoA. Required for acetate recapture but not for acetate excretion when this organism is grown on ethanolamine. Its function is as follows. Enables the cell to use acetate during aerobic growth to generate energy via the TCA cycle, and biosynthetic compounds via the glyoxylate shunt. Acetylates CheY, the response regulator involved in flagellar movement and chemotaxis. This chain is Acetyl-coenzyme A synthetase, found in Salmonella typhimurium (strain LT2 / SGSC1412 / ATCC 700720).